The sequence spans 300 residues: Acetyl-coenzyme A carboxylase carboxyl transferase subunit beta 2 (300 aa).

The 269-residue stretch at 26-294 (VWIKCPSCRE…ATAHKSEPIV (269 aa)) folds into the CoA carboxyltransferase N-terminal domain. The Zn(2+) site is built by Cys30, Cys33, Cys49, and Cys51. The C4-type zinc-finger motif lies at 30–51 (CPSCRELIYHKQLAERMKVCRC).

This sequence belongs to the AccD/PCCB family. As to quaternary structure, acetyl-CoA carboxylase is a heterohexamer composed of biotin carboxyl carrier protein (AccB), biotin carboxylase (AccC) and two subunits each of ACCase subunit alpha (AccA) and ACCase subunit beta (AccD). The cofactor is Zn(2+).

The protein resides in the cytoplasm. The catalysed reaction is N(6)-carboxybiotinyl-L-lysyl-[protein] + acetyl-CoA = N(6)-biotinyl-L-lysyl-[protein] + malonyl-CoA. It functions in the pathway lipid metabolism; malonyl-CoA biosynthesis; malonyl-CoA from acetyl-CoA: step 1/1. Its function is as follows. Component of the acetyl coenzyme A carboxylase (ACC) complex. Biotin carboxylase (BC) catalyzes the carboxylation of biotin on its carrier protein (BCCP) and then the CO(2) group is transferred by the transcarboxylase to acetyl-CoA to form malonyl-CoA. The protein is Acetyl-coenzyme A carboxylase carboxyl transferase subunit beta 2 of Roseiflexus sp. (strain RS-1).